The sequence spans 225 residues: MSSQTLVAAGSLEEAIKEALVSSPKKRRFTQSVEMIVTLRDVDVKKPENRLNTVVALPHPAPGKLAKVAVIASGDTALKAKEAGADIVVDKDELQKIGNDKKAAKKLAKRYDFFLAQPDLMPLVGRVLGKYLGPRGKMPQPIPPNVALDALIERFRRSVRIRMKDEPQIACRIGVETQPVEHLAENARAVLAEILKKFPPPNIDRIYFKLTMGRPVKVSREVVRK.

This sequence belongs to the universal ribosomal protein uL1 family. In terms of assembly, part of the 50S ribosomal subunit.

Functionally, binds directly to 23S rRNA. Probably involved in E site tRNA release. In terms of biological role, protein L1 is also a translational repressor protein, it controls the translation of its operon by binding to its mRNA. The protein is Large ribosomal subunit protein uL1 of Thermofilum pendens (strain DSM 2475 / Hrk 5).